A 190-amino-acid polypeptide reads, in one-letter code: Small ribosomal subunit protein eS7A (190 aa).

S2 is subject to N-acetylserine. Glycyl lysine isopeptide (Lys-Gly) (interchain with G-Cter in ubiquitin) cross-links involve residues K83, K84, and K124.

This sequence belongs to the eukaryotic ribosomal protein eS7 family. As to quaternary structure, component of the small ribosomal subunit (SSU). Mature yeast ribosomes consist of a small (40S) and a large (60S) subunit. The 40S small subunit contains 1 molecule of ribosomal RNA (18S rRNA) and 33 different proteins (encoded by 57 genes). The large 60S subunit contains 3 rRNA molecules (25S, 5.8S and 5S rRNA) and 46 different proteins (encoded by 81 genes). Interacts with snoRNA U3. uS11 interacts with MPP10. Component of the ribosomal small subunit (SSU) processome composed of at least 40 protein subunits and snoRNA U3. N-terminally acetylated by acetyltransferase NatA. Post-translationally, ubiquitinated at Lys-83 and Lys-84 in response to stalled ribosomes, leading to activation of the No-Go Decay (NGD) pathway: first monoubiquitinated by MOT2/NOT4, followed by formation by HEL2 of 'Lys-63'-linked polyubiquitin chains on monoubiquitin.

The protein localises to the cytoplasm. It is found in the nucleus. Its subcellular location is the nucleolus. Functionally, component of the ribosome, a large ribonucleoprotein complex responsible for the synthesis of proteins in the cell. The small ribosomal subunit (SSU) binds messenger RNAs (mRNAs) and translates the encoded message by selecting cognate aminoacyl-transfer RNA (tRNA) molecules. The large subunit (LSU) contains the ribosomal catalytic site termed the peptidyl transferase center (PTC), which catalyzes the formation of peptide bonds, thereby polymerizing the amino acids delivered by tRNAs into a polypeptide chain. The nascent polypeptides leave the ribosome through a tunnel in the LSU and interact with protein factors that function in enzymatic processing, targeting, and the membrane insertion of nascent chains at the exit of the ribosomal tunnel. eS7 is involved in nucleolar processing of pre-18S ribosomal RNA and ribosome assembly. This Saccharomyces cerevisiae (strain ATCC 204508 / S288c) (Baker's yeast) protein is Small ribosomal subunit protein eS7A.